A 661-amino-acid polypeptide reads, in one-letter code: PAN2-PAN3 deadenylation complex subunit pan3 (661 aa).

Disordered stretches follow at residues 1–29 and 53–131; these read MASVGKPSLEDARRGTGSPKMKARENAKD and DPHK…RQDA. Residues 26–55 form a C3H1-type zinc finger; the sequence is NAKDTLCRNVTIYGRCRYEDKGCAFNHDPH. A PABPC-interacting motif-2 (PAM-2) motif is present at residues 63 to 83; sequence NASKKRFNVDSPSFTPSLLPS. The span at 77-104 shows a compositional bias: low complexity; sequence TPSLLPSNGSSPTSSSSSLKKSSTISPK. The segment covering 115–126 has biased composition (polar residues); that stretch reads TAASRSNTSTPG. The pseudokinase domain stretch occupies residues 263–524; the sequence is QTLPNTQLPA…NIDILINGIS (262 aa). ATP-binding positions include Arg-315, 364 to 371, and 424 to 425; these read DYHPLSKT and SK. The stretch at 525–563 forms a coiled coil; that stretch reads SQLMSTFDSALHLDDQLTSDLGRELENGRLVRLLTKLNF. The segment at 564–661 is knob domain; the sequence is INERPEHEHD…ALLRPSRRPH (98 aa).

It belongs to the protein kinase superfamily. PAN3 family. As to quaternary structure, homodimer. Forms a heterotrimer with a catalytic subunit pan2 to form the poly(a)-nuclease (PAN) deadenylation complex. Interacts (via PAM-2 motif) with poly(A)-binding protein pab1 (via PABC domain), conferring substrate specificity of the enzyme complex.

The protein localises to the cytoplasm. In terms of biological role, regulatory subunit of the poly(A)-nuclease (PAN) deadenylation complex, one of two cytoplasmic mRNA deadenylases involved in mRNA turnover. PAN specifically shortens poly(A) tails of RNA and the activity is stimulated by poly(A)-binding protein pab1. PAN deadenylation is followed by rapid degradation of the shortened mRNA tails by the CCR4-NOT complex. Deadenylated mRNAs are then degraded by two alternative mechanisms, namely exosome-mediated 3'-5' exonucleolytic degradation, or deadenylation-dependent mRNA decaping and subsequent 5'-3' exonucleolytic degradation by XRN1. May also be involved in post-transcriptional maturation of mRNA poly(A) tails. pan3 acts as a positive regulator for PAN activity, recruiting the catalytic subunit pan2 to mRNA via its interaction with RNA and with pab1. The chain is PAN2-PAN3 deadenylation complex subunit pan3 from Emericella nidulans (strain FGSC A4 / ATCC 38163 / CBS 112.46 / NRRL 194 / M139) (Aspergillus nidulans).